The chain runs to 295 residues: MSKPRKQHGVVVGVDGSLESDAAACWGATDAAMRNIPLTVVHVVNADVATWPPMPYPETWGVWQEDEGRQIVANAVKLAKEAVGADRKLSVKSELVFSTPVPTMVEISNEAEMVVLGSSGRGALARGLLGSVSSSLVRRAGCPVAVIHSDDAVIPDPQHAPVLVGIDGSPVSELATAVAFDEASRRGVELIAVHAWSDVEVVELPGLDFSAVQQEAELSLAERLAGWQERYPDVPVSRVVVCDRPARKLVQKSASAQLVVVGSHGRGGLTGMLLGSVSNAVLHAARVPVIVARQS.

Residues Gly13, 117 to 123, 131 to 132, Gly165, Asp198, 262 to 268, and 276 to 278 each bind ATP; these read GSSGRGA, SV, GSHGRGG, and SVS.

It belongs to the universal stress protein A family.

The polypeptide is Universal stress protein Mb2028c (Mycobacterium bovis (strain ATCC BAA-935 / AF2122/97)).